Consider the following 553-residue polypeptide: Formate--tetrahydrofolate ligase (553 aa).

Residue 63–70 (TPAGEGKT) coordinates ATP.

The protein belongs to the formate--tetrahydrofolate ligase family.

It catalyses the reaction (6S)-5,6,7,8-tetrahydrofolate + formate + ATP = (6R)-10-formyltetrahydrofolate + ADP + phosphate. It participates in one-carbon metabolism; tetrahydrofolate interconversion. In Oenococcus oeni (strain ATCC BAA-331 / PSU-1), this protein is Formate--tetrahydrofolate ligase.